A 283-amino-acid chain; its full sequence is Large ribosomal subunit protein uL2 (283 aa).

Disordered stretches follow at residues 34 to 53 and 224 to 283; these read TEPY…TARH and AMNP…KKKK. The span at 232 to 245 shows a compositional bias: gly residues; the sequence is NGGGQGKSKGGGGW. Positions 256–268 are enriched in basic residues; it reads AKGKKTRHKRKNS.

Belongs to the universal ribosomal protein uL2 family. In terms of assembly, part of the 50S ribosomal subunit. Forms a bridge to the 30S subunit in the 70S ribosome.

Its function is as follows. One of the primary rRNA binding proteins. Required for association of the 30S and 50S subunits to form the 70S ribosome, for tRNA binding and peptide bond formation. It has been suggested to have peptidyltransferase activity; this is somewhat controversial. Makes several contacts with the 16S rRNA in the 70S ribosome. In Methylacidiphilum infernorum (isolate V4) (Methylokorus infernorum (strain V4)), this protein is Large ribosomal subunit protein uL2.